Here is a 567-residue protein sequence, read N- to C-terminus: CTD small phosphatase-like protein 2 (567 aa).

3 disordered regions span residues 31 to 53, 100 to 150, and 280 to 361; these read QQQQ…HQCE, ASST…FSSV, and NKEN…EEFN. 3 stretches are compositionally biased toward low complexity: residues 100–118, 130–150, and 286–297; these read ASST…SPLK, SMND…FSSV, and ESNNSNSNSNSS. A compositionally biased stretch (polar residues) spans 298 to 308; it reads PSFFHNLQQHP. Low complexity predominate over residues 309 to 332; the sequence is TSAATTTTTTTTTITTTSATTSII. Residues 337–360 are compositionally biased toward acidic residues; it reads NSDDEIDDECDDESEEEEEDEEEF. The 159-residue stretch at 386-544 folds into the FCP1 homology domain; it reads HSSPKISLVL…LQLVPFLESL (159 aa).

This sequence belongs to the CTDSPL2 family.

In terms of biological role, probable phosphatase. In Dictyostelium discoideum (Social amoeba), this protein is CTD small phosphatase-like protein 2 (ctdspl2).